Consider the following 248-residue polypeptide: Membrane-spanning 4-domains subfamily A member 6A (248 aa).

At 1–46 the chain is on the cytoplasmic side; that stretch reads MTSQPVPNETIIVLPSNVINFSQAEKPEPTNQGQDSLKKHLHAEIK. The helical transmembrane segment at 47-67 threads the bilayer; the sequence is VIGTIQILCGMMVLSLGIILA. Residues 68-84 are Extracellular-facing; that stretch reads SASFSPNFTQVTSTLLN. The helical transmembrane segment at 85 to 105 threads the bilayer; it reads SAYPFIGPFFFIISGSLSIAT. Residues 106–116 lie on the Cytoplasmic side of the membrane; the sequence is EKRLTKLLVHS. A helical membrane pass occupies residues 117 to 137; it reads SLVGSILSALSALVGFIILSV. Residues 138–185 lie on the Extracellular side of the membrane; sequence KQATLNPASLQCELDKNNIPTRSYVSYFYHDSLYTTDCYTAKASLAGT. The helical transmembrane segment at 186 to 206 threads the bilayer; it reads LSLMLICTLLEFCLAVLTAVL. The Cytoplasmic portion of the chain corresponds to 207 to 248; sequence RWKQAYSDFPGSVLFLPHSYIGNSGMSSKMTHDCGYEELLTS.

The protein belongs to the MS4A family. In terms of tissue distribution, variable expression in some B-cell, myelomonocytic, and erythroleukemia cell lines.

Its subcellular location is the membrane. Its function is as follows. May be involved in signal transduction as a component of a multimeric receptor complex. The chain is Membrane-spanning 4-domains subfamily A member 6A (MS4A6A) from Homo sapiens (Human).